We begin with the raw amino-acid sequence, 1186 residues long: DNA excision repair protein ERCC-5 (1186 aa).

The N-domain stretch occupies residues 1–78 (MGVQGLWKLL…RIRPIFVFDG (78 aa)). N6-acetyllysine is present on lysine 8. Aspartate 30 provides a ligand contact to Mg(2+). Residues 31 to 67 (ISIWLNQALKGVRDRHGNSIENPHLLTLFHRLCKLLF) form a DNA-binding; may bind to the undamaged single-strand DNA of the DNA repair bubble region. Position 77 (aspartate 77) interacts with Mg(2+). Residues 79-785 (DAPLLKKQTL…LRLFGIPYIQ (707 aa)) are spacer region. Disordered stretches follow at residues 306–342 (ESLP…PPSP), 354–385 (GSSS…SISP), 404–473 (CAGD…SVPK), 510–533 (HSDA…TNSV), and 667–724 (QAEF…AEDS). Over residues 325–336 (PCEKLKTEKEPD) the composition is skewed to basic and acidic residues. At serine 384 the chain carries Phosphoserine. Residues 454–472 (AEEHVASTNEGREPTDSVP) show a composition bias toward basic and acidic residues. Serine 705 carries the phosphoserine modification. The I-domain stretch occupies residues 786-881 (APMEAEAQCA…VTAMEILNEF (96 aa)). Residues glutamate 789, glutamate 791, aspartate 810, and aspartate 812 each contribute to the Mg(2+) site. The interval 820–836 (HVYRNFFNKNKFVEYYQ) is DNA-binding; may bind to the undamaged single-strand DNA of the DNA repair bubble. The interval 848 to 880 (RNKLINLAYLLGSDYTEGIPTVGCVTAMEILNE) is DNA-binding; H2TH (helix-2turn-helix) motif which binds double-stranded DNA. Aspartate 861 contacts Mg(2+). A DNA-binding; may bind double-stranded DNA region spans residues 912-918 (TKVKKKL). The tract at residues 981–1009 (LKQLDAQQTQLRIDSFFRLAQQEKEDAKR) is interaction with PCNA. The interaction with ERCC6/CSB stretch occupies residues 1011–1186 (KSQRLNRAVT…RRARGRKRKT (176 aa)). 2 disordered regions span residues 1056 to 1081 (QKRG…SKGK) and 1095 to 1186 (ESSD…KRKT). The Nuclear localization signal 1 signature appears at 1057 to 1074 (KRGITNTLEESSSLKRKR). Residues 1124 to 1133 (TSASDSQNSV) show a composition bias toward polar residues. A Nuclear localization signal 2 motif is present at residues 1169–1186 (FGKKRRKLRRARGRKRKT). The segment covering 1169-1186 (FGKKRRKLRRARGRKRKT) has biased composition (basic residues).

Belongs to the XPG/RAD2 endonuclease family. XPG subfamily. As to quaternary structure, monomer. Homodimer. Component of the homologous recombination repair (HR) complex composed of ERCC5/XPG, BRCA2, PALB2, DSS1 and RAD51. Within the complex, interacts with BRCA2 and PALB2. Interacts with RNA polymerase II. Interacts (via C-terminus) with ERCC6/CSB; the interaction stimulates ERCC6/CSB binding to the DNA repair bubble and ERCC6/CSB ATPase activity. May form a complex composed of RNA polymerase II, ERCC6/CSB and ERCC5/XPG which associates with the DNA repair bubble during transcription-coupled nucleotide excision repair. Interacts with BRCA1; the interaction promotes the release of BRCA1 from DNA. Interacts with PCNA. Interacts with NTHL1; the interaction stimulates NTHL1 activity and NTHL1 binding to its DNA substrate. Requires Mg(2+) as cofactor.

The protein resides in the nucleus. It is found in the chromosome. Its function is as follows. Single-stranded structure-specific DNA endonuclease involved in DNA excision repair. Makes the 3'incision in DNA nucleotide excision repair (NER). Binds and bends DNA repair bubble substrate and breaks base stacking at the single-strand/double-strand DNA junction of the DNA bubble. Plays a role in base excision repair (BER) by promoting the binding of DNA glycosylase NTHL1 to its substrate and increasing NTHL1 catalytic activity that removes oxidized pyrimidines from DNA. Involved in transcription-coupled nucleotide excision repair (TCR) which allows RNA polymerase II-blocking lesions to be rapidly removed from the transcribed strand of active genes. Functions during the initial step of TCR in cooperation with ERCC6/CSB to recognized stalled RNA polymerase II. Also, stimulates ERCC6/CSB binding to the DNA repair bubble and ERCC6/CSB ATPase activity. Required for DNA replication fork maintenance and preservation of genomic stability. Involved in homologous recombination repair (HRR) induced by DNA replication stress by recruiting RAD51, BRCA2, and PALB2 to the damaged DNA site. In TFIIH stimulates the 5'-3' helicase activity of XPD/ERCC2 and the DNA translocase activity of XPB/ERCC3. During HRR, binds to the replication fork with high specificity and stabilizes it. Also, acts upstream of HRR, to promote the release of BRCA1 from DNA. In Homo sapiens (Human), this protein is DNA excision repair protein ERCC-5 (ERCC5).